The chain runs to 86 residues: Large ribosomal subunit protein bL27 (86 aa).

The span at 1–10 (MAQKKGGGST) shows a compositional bias: gly residues. The tract at residues 1 to 20 (MAQKKGGGSTRNGRDSESKR) is disordered.

Belongs to the bacterial ribosomal protein bL27 family.

This chain is Large ribosomal subunit protein bL27, found in Bordetella avium (strain 197N).